We begin with the raw amino-acid sequence, 126 residues long: Small ribosomal subunit protein uS11 (126 aa).

The protein belongs to the universal ribosomal protein uS11 family. In terms of assembly, part of the 30S ribosomal subunit.

Its function is as follows. Located on the platform of the 30S subunit. The chain is Small ribosomal subunit protein uS11 from Methanosarcina mazei (strain ATCC BAA-159 / DSM 3647 / Goe1 / Go1 / JCM 11833 / OCM 88) (Methanosarcina frisia).